Consider the following 136-residue polypeptide: MSATSNMRVFLPVLLAALLGMEQVHSLMCFSCTDQKNNINCLWPVSCQEKDHYCITLSAAAGFGNVNLGYTLNKGCSPICPSENVNLNLGVASVNSYCCQSSFCNFSAAGLGLRASIPLLGLGLLLSLLALLQLSP.

An N-terminal signal peptide occupies residues Met-1–Ser-26. The 92-residue stretch at Leu-27 to Pro-118 folds into the UPAR/Ly6 domain. 5 disulfides stabilise this stretch: Cys-29/Cys-54, Cys-32/Cys-41, Cys-47/Cys-76, Cys-80/Cys-98, and Cys-99/Cys-104. Asn-105 is a glycosylation site (N-linked (GlcNAc...) asparagine). The GPI-anchor amidated alanine moiety is linked to residue Ala-108. Residues Ala-109–Pro-136 constitute a propeptide, removed in mature form.

In terms of assembly, interacts with CHRNA4. Interacts with CD3Z/CD247. In terms of tissue distribution, ubiquitously expressed in mouse adult tissues with maximal expression in the lung and the salivary gland. Expression is strikingly lower in the fetal tissues except for the placenta. Present in thymus where its expression is observed in immature thymocytes and thymic stromal cells. Also found on functionally active T-cells as well as B-cells and thymic dendritic cells.

It localises to the cell membrane. Functionally, GPI-anchored cell surface protein that regulates T-lymphocytes proliferation, differentiation, and activation. Regulates the T-cell receptor (TCR) signaling by interacting with component CD3Z/CD247 at the plasma membrane, leading to CD3Z/CD247 phosphorylation modulation. Restricts the entry of murine coronavirus, mouse hepatitis virus, by interfering with spike protein-mediated membrane fusion. Also plays an essential role in placenta formation by acting as the main receptor for syncytin-A (SynA). Therefore, participates in the normal fusion of syncytiotrophoblast layer I (SynT-I) and in the proper morphogenesis of both fetal and maternal vasculatures within the placenta. May also act as a modulator of nicotinic acetylcholine receptors (nAChRs) activity. In vitro inhibits alpha-3:beta-4-containing nAChRs maximum response. This is Lymphocyte antigen 6E from Mus musculus (Mouse).